Here is an 84-residue protein sequence, read N- to C-terminus: Putative antitoxin VapB7 (84 aa).

In terms of biological role, antitoxin component of a possible type II toxin-antitoxin (TA) system. The cognate toxin is VapC7. In Mycobacterium tuberculosis (strain ATCC 25618 / H37Rv), this protein is Putative antitoxin VapB7 (vapB7).